The sequence spans 422 residues: Probable FBD-associated F-box protein At1g32375 (422 aa).

In terms of domain architecture, F-box spans 1–53 (MDKLSQLPEALLVRILSLLSAKDVVSTMVLSKRWQFLWMLVPKLIYDDSYQAI). Residues 342–392 (CWNEPSAVPECLLTSLETLEWVKYEGTEEEKEVAAFILRSGSCLKKVTISS) enclose the FBD domain.

This is Probable FBD-associated F-box protein At1g32375 from Arabidopsis thaliana (Mouse-ear cress).